The sequence spans 206 residues: Pyridoxine/pyridoxamine 5'-phosphate oxidase (206 aa).

Residues arginine 55–lysine 60, tyrosine 70–threonine 71, arginine 76, lysine 77, and glutamine 99 each bind FMN. Lysine 60 provides a ligand contact to substrate. The substrate site is built by tyrosine 117, arginine 121, and serine 125. Residues glutamine 134–serine 135 and tryptophan 179 each bind FMN. Arginine 185–histidine 187 lines the substrate pocket. Residue arginine 189 participates in FMN binding.

This sequence belongs to the pyridoxamine 5'-phosphate oxidase family. In terms of assembly, homodimer. It depends on FMN as a cofactor.

The enzyme catalyses pyridoxamine 5'-phosphate + O2 + H2O = pyridoxal 5'-phosphate + H2O2 + NH4(+). It carries out the reaction pyridoxine 5'-phosphate + O2 = pyridoxal 5'-phosphate + H2O2. The protein operates within cofactor metabolism; pyridoxal 5'-phosphate salvage; pyridoxal 5'-phosphate from pyridoxamine 5'-phosphate: step 1/1. It functions in the pathway cofactor metabolism; pyridoxal 5'-phosphate salvage; pyridoxal 5'-phosphate from pyridoxine 5'-phosphate: step 1/1. Catalyzes the oxidation of either pyridoxine 5'-phosphate (PNP) or pyridoxamine 5'-phosphate (PMP) into pyridoxal 5'-phosphate (PLP). In Myxococcus xanthus (strain DK1622), this protein is Pyridoxine/pyridoxamine 5'-phosphate oxidase.